Consider the following 341-residue polypeptide: Hygromycin-B 4-O-kinase (341 aa).

Asp198 functions as the Proton acceptor in the catalytic mechanism.

It belongs to the aminoglycoside phosphotransferase family.

The enzyme catalyses hygromycin B + ATP = 4-O-phosphohygromycin B + ADP + H(+). Its function is as follows. The aminoglycoside phosphotransferases achieve inactivation of their antibiotic substrates by phosphorylation. Only phosphorylates hygromycin and closely related compounds such as demethyl analogs and destomycin. The polypeptide is Hygromycin-B 4-O-kinase (hph) (Escherichia coli).